The chain runs to 195 residues: MSARPEPQPGSERNATEPLPSHLDPTTYPRTLTTTHGPTSIPLHLELTYHTLSPTTALQHVSSPSSGANILFLGTTRDTFDDRPVARLSYTSYPALALKSLHKISSEAVEKFGLNGVYIAHRLGEVPVGEASIVVAVGAGHRGEAWRGAEWVLEVVKERVEVWKREEFVDGGMEWRENRERDGFGKLKTKKEDSR.

The segment at 1 to 37 is disordered; it reads MSARPEPQPGSERNATEPLPSHLDPTTYPRTLTTTHG. Low complexity predominate over residues 25–37; it reads PTTYPRTLTTTHG. Residues 141–142, Lys-157, and 164–166 contribute to the substrate site; these read HR and KRE.

Belongs to the MoaE family. MOCS2B subfamily. Heterotetramer; composed of 2 small (MOCS2A) and 2 large (MOCS2B) subunits.

It is found in the cytoplasm. It catalyses the reaction 2 [molybdopterin-synthase sulfur-carrier protein]-C-terminal-Gly-aminoethanethioate + cyclic pyranopterin phosphate + H2O = molybdopterin + 2 [molybdopterin-synthase sulfur-carrier protein]-C-terminal Gly-Gly + 2 H(+). The protein operates within cofactor biosynthesis; molybdopterin biosynthesis. Functionally, catalytic subunit of the molybdopterin synthase complex, a complex that catalyzes the conversion of precursor Z into molybdopterin. Acts by mediating the incorporation of 2 sulfur atoms from thiocarboxylated MOCS2A into precursor Z to generate a dithiolene group. In Emericella nidulans (strain FGSC A4 / ATCC 38163 / CBS 112.46 / NRRL 194 / M139) (Aspergillus nidulans), this protein is Molybdopterin synthase catalytic subunit.